The following is a 71-amino-acid chain: EAGEECDCGSPENPCCDAATCKLRPGAQCAEGLCCDQCKFMKEGTVCRARGDDVNDYCNGISAGCPRNPFH.

Residues 1–71 (EAGEECDCGS…SAGCPRNPFH (71 aa)) form the Disintegrin domain. Cystine bridges form between C6–C21, C8–C16, C15–C38, C29–C35, C34–C58, and C47–C65. Residues 50–52 (RGD) carry the Cell attachment site motif.

The protein belongs to the venom metalloproteinase (M12B) family. P-II subfamily. P-IIa sub-subfamily. Monomer (disintegrin). In terms of tissue distribution, expressed by the venom gland.

The protein resides in the secreted. In terms of biological role, inhibits fibrinogen interaction with platelets. Acts by binding to alpha-IIb/beta-3 (ITGA2B/ITGB3) on the platelet surface and inhibits aggregation induced by ADP, thrombin, platelet-activating factor and collagen. This chain is Disintegrin applaggin, found in Agkistrodon piscivorus piscivorus (Eastern cottonmouth).